A 168-amino-acid chain; its full sequence is MPRSRINGNFIDKTFSIVANILLRIIPTTSGEKEAFTYYRDGMSAQSDGNYAEALQNYYEATRLEIDPYDRSYILYNIGLIHTSNGEHTKALEYYFRALERNPFLPQAFNNMAVICHYRGEQAIRQGDSEIAEAWSDQAAEYWKQAIALTPGNYIEAHNWLKITRRFE.

TPR repeat units lie at residues 35–68 (AFTYYRDGMSAQSDGNYAEALQNYYEATRLEIDP), 72–105 (SYILYNIGLIHTSNGEHTKALEYYFRALERNPFL), and 120–153 (GEQAIRQGDSEIAEAWSDQAAEYWKQAIALTPGN).

Belongs to the Ycf3 family.

It localises to the plastid. It is found in the chloroplast thylakoid membrane. In terms of biological role, essential for the assembly of the photosystem I (PSI) complex. May act as a chaperone-like factor to guide the assembly of the PSI subunits. In Chloranthus spicatus (Chulantree), this protein is Photosystem I assembly protein Ycf3.